A 201-amino-acid polypeptide reads, in one-letter code: Recombination protein RecR (201 aa).

Residues 60 to 75 (CSTCGNVDTADPCMIC) form a C4-type zinc finger. The 96-residue stretch at 83–178 (GTIIVVEDVS…KVTRLAHGVP (96 aa)) folds into the Toprim domain.

The protein belongs to the RecR family.

May play a role in DNA repair. It seems to be involved in an RecBC-independent recombinational process of DNA repair. It may act with RecF and RecO. The chain is Recombination protein RecR from Mesorhizobium japonicum (strain LMG 29417 / CECT 9101 / MAFF 303099) (Mesorhizobium loti (strain MAFF 303099)).